The following is a 39-amino-acid chain: Photosystem II reaction center protein J (39 aa).

Residues 9 to 29 (LWIIATFGGIAALTVVGLFIY) traverse the membrane as a helical segment.

Belongs to the PsbJ family. As to quaternary structure, PSII is composed of 1 copy each of membrane proteins PsbA, PsbB, PsbC, PsbD, PsbE, PsbF, PsbH, PsbI, PsbJ, PsbK, PsbL, PsbM, PsbT, PsbX, PsbY, PsbZ, Psb30/Ycf12, at least 3 peripheral proteins of the oxygen-evolving complex and a large number of cofactors. It forms dimeric complexes.

It is found in the plastid. The protein localises to the chloroplast thylakoid membrane. In terms of biological role, one of the components of the core complex of photosystem II (PSII). PSII is a light-driven water:plastoquinone oxidoreductase that uses light energy to abstract electrons from H(2)O, generating O(2) and a proton gradient subsequently used for ATP formation. It consists of a core antenna complex that captures photons, and an electron transfer chain that converts photonic excitation into a charge separation. The chain is Photosystem II reaction center protein J from Guillardia theta (Cryptophyte).